The following is a 407-amino-acid chain: Bifunctional enzyme IspD/IspF (407 aa).

The interval 1–246 is 2-C-methyl-D-erythritol 4-phosphate cytidylyltransferase; the sequence is MQPLAEATTI…RQDHVSFPDI (246 aa). Residues 247–407 are 2-C-methyl-D-erythritol 2,4-cyclodiphosphate synthase; sequence RTGNGYDVHS…TVIYPGEVPE (161 aa). A divalent metal cation contacts are provided by Asp-253 and His-255. Residues 253 to 255 and 279 to 280 each bind 4-CDP-2-C-methyl-D-erythritol 2-phosphate; these read DVH and HS. Position 287 (His-287) interacts with a divalent metal cation. Residues 301–303, 377–380, Phe-384, and Arg-387 each bind 4-CDP-2-C-methyl-D-erythritol 2-phosphate; these read DIG and TTNE.

The protein in the N-terminal section; belongs to the IspD/TarI cytidylyltransferase family. IspD subfamily. It in the C-terminal section; belongs to the IspF family. A divalent metal cation is required as a cofactor.

The catalysed reaction is 2-C-methyl-D-erythritol 4-phosphate + CTP + H(+) = 4-CDP-2-C-methyl-D-erythritol + diphosphate. The enzyme catalyses 4-CDP-2-C-methyl-D-erythritol 2-phosphate = 2-C-methyl-D-erythritol 2,4-cyclic diphosphate + CMP. Its pathway is isoprenoid biosynthesis; isopentenyl diphosphate biosynthesis via DXP pathway; isopentenyl diphosphate from 1-deoxy-D-xylulose 5-phosphate: step 2/6. It functions in the pathway isoprenoid biosynthesis; isopentenyl diphosphate biosynthesis via DXP pathway; isopentenyl diphosphate from 1-deoxy-D-xylulose 5-phosphate: step 4/6. Functionally, bifunctional enzyme that catalyzes the formation of 4-diphosphocytidyl-2-C-methyl-D-erythritol from CTP and 2-C-methyl-D-erythritol 4-phosphate (MEP) (IspD), and catalyzes the conversion of 4-diphosphocytidyl-2-C-methyl-D-erythritol 2-phosphate (CDP-ME2P) to 2-C-methyl-D-erythritol 2,4-cyclodiphosphate (ME-CPP) with a corresponding release of cytidine 5-monophosphate (CMP) (IspF). In Brucella anthropi (strain ATCC 49188 / DSM 6882 / CCUG 24695 / JCM 21032 / LMG 3331 / NBRC 15819 / NCTC 12168 / Alc 37) (Ochrobactrum anthropi), this protein is Bifunctional enzyme IspD/IspF.